An 87-amino-acid polypeptide reads, in one-letter code: Large ribosomal subunit protein bL27 (87 aa).

A disordered region spans residues 1–23 (MAHKKGTGSTRNGRDSNAQRLGV). The segment covering 7-19 (TGSTRNGRDSNAQ) has biased composition (polar residues).

The protein belongs to the bacterial ribosomal protein bL27 family.

The chain is Large ribosomal subunit protein bL27 (rpmA) from Synechocystis sp. (strain ATCC 27184 / PCC 6803 / Kazusa).